We begin with the raw amino-acid sequence, 208 residues long: Probable acyl-homoserine-lactone synthase (208 aa).

It belongs to the autoinducer synthase family.

It carries out the reaction a fatty acyl-[ACP] + S-adenosyl-L-methionine = an N-acyl-L-homoserine lactone + S-methyl-5'-thioadenosine + holo-[ACP] + H(+). Required for the synthesis of OHHL (N-(3-oxooctanoyl)-L-homoserine lactone), an autoinducer molecule which binds to TraR and thus acts in the control of conjugal transfer. The sequence is that of Probable acyl-homoserine-lactone synthase (traI) from Sinorhizobium fredii (strain NBRC 101917 / NGR234).